The primary structure comprises 973 residues: ATP-dependent DNA helicase homolog RECG1, chloroplastic/mitochondrial (973 aa).

The tract at residues 1 to 208 (MAAVTLSPCS…ATSEVEATSD (208 aa)) is sufficient for chloroplastic and mitochondrial trgeting. Residues 174 to 200 (LLQNDDSSDPREDILDDGSSFTSKTAT) form a disordered region. One can recognise a Helicase ATP-binding domain in the interval 536–725 (DLKRPVPMNR…LYGDISLTQI (190 aa)). 549–556 (GDVGCGKT) contacts ATP. Residues 655-658 (DEQQ) carry the DEQQ box motif. A Helicase C-terminal domain is found at 746 to 904 (GIKEVYSMML…GFYLANIDLL (159 aa)).

The protein belongs to the helicase family. RecG subfamily. In terms of tissue distribution, expressed in most tissues, not seen in pollen, ovules or developing seeds.

The protein localises to the plastid. The protein resides in the chloroplast. Its subcellular location is the mitochondrion. It catalyses the reaction Couples ATP hydrolysis with the unwinding of duplex DNA by translocating in the 3'-5' direction.. The catalysed reaction is ATP + H2O = ADP + phosphate + H(+). Its function is as follows. Plays a critical role in recombination and DNA repair. Helps process Holliday junction (HJ) intermediates to mature products by catalyzing branch migration. Has replication fork regression activity, unwinds stalled or blocked replication forks to make a HJ that can be resolved. Has a DNA unwinding activity characteristic of a DNA helicase with 3'-5' polarity. Plays a role in recombination surveillance and repair of double-stranded (ds)DNA breaks in the mitochondrion. May be able to dissociate D- and R-loops. Able to complement UV sensitivity of a recG deletion in E.coli. This Arabidopsis thaliana (Mouse-ear cress) protein is ATP-dependent DNA helicase homolog RECG1, chloroplastic/mitochondrial.